An 887-amino-acid polypeptide reads, in one-letter code: Dystrophin-like protein 1 (887 aa).

The region spanning Tyr30 to Ala197 is the PID domain. 2 stretches are compositionally biased toward basic and acidic residues: residues Met176–Lys186 and Ile205–Arg216. 5 disordered regions span residues Met176 to Ile254, Glu506 to Arg606, Gln641 to Ala753, Ile804 to Thr839, and Asn853 to Gln887. Over residues Lys242–Ile254 the composition is skewed to polar residues. Residues Gln434–Glu506 adopt a coiled-coil conformation. Residues Ser510–Pro519 are compositionally biased toward low complexity. Residues Lys573–Pro588 are compositionally biased toward basic and acidic residues. A compositionally biased stretch (polar residues) spans Asp597–Arg606. 2 stretches are compositionally biased toward polar residues: residues Asn816 to Ser827 and Ser863 to Gln887.

Component of the dystrophin glycoprotein complex (DGC). Interacts with zyx-1. Expressed in muscles of the head, body wall and vulva. In some animals, weaker expression is observed in the intestinal muscles (at protein level). Isoform a is expressed in lateral neurons SDQL and SDQR.

Together with dys-1 and hlh-1, participates in a common muscular function. This chain is Dystrophin-like protein 1, found in Caenorhabditis elegans.